The following is a 150-amino-acid chain: Macrodomain Ter protein (150 aa).

It belongs to the MatP family. As to quaternary structure, homodimer.

The protein resides in the cytoplasm. In terms of biological role, required for spatial organization of the terminus region of the chromosome (Ter macrodomain) during the cell cycle. Prevents early segregation of duplicated Ter macrodomains during cell division. Binds specifically to matS, which is a 13 bp signature motif repeated within the Ter macrodomain. In Erwinia tasmaniensis (strain DSM 17950 / CFBP 7177 / CIP 109463 / NCPPB 4357 / Et1/99), this protein is Macrodomain Ter protein.